Here is a 138-residue protein sequence, read N- to C-terminus: MFVPESDPLRGDRRLSPAAAKQLAPQALAYLGDALYEFHVRLRLLLPAQRSHQVHQSVVGAVRAERQAELLVSLLPLLTAEELEIVRRGRNAAGRVPRRLTGEYYQQATGLETLLGYLYLCDPQRLQALLQQLPVTEY.

Aspartate 33 is an active-site residue.

The protein belongs to the MrnC RNase family. As to quaternary structure, homodimer. Mg(2+) is required as a cofactor.

The protein resides in the cytoplasm. Its function is as follows. Involved in correct processing of both the 5' and 3' ends of 23S rRNA precursor. Processes 30S rRNA precursor transcript even in absence of ribonuclease 3 (Rnc); Rnc processes 30S rRNA into smaller rRNA precursors. In Synechococcus sp. (strain ATCC 27144 / PCC 6301 / SAUG 1402/1) (Anacystis nidulans), this protein is Mini-ribonuclease 3.